The chain runs to 410 residues: Histidine--tRNA ligase (410 aa).

This sequence belongs to the class-II aminoacyl-tRNA synthetase family. Homodimer.

Its subcellular location is the cytoplasm. It carries out the reaction tRNA(His) + L-histidine + ATP = L-histidyl-tRNA(His) + AMP + diphosphate + H(+). This chain is Histidine--tRNA ligase, found in Elusimicrobium minutum (strain Pei191).